Consider the following 1358-residue polypeptide: Mediator of RNA polymerase II transcription subunit 12 (1358 aa).

Belongs to the Mediator complex subunit 12 family. Component of the SRB8-11 complex, which itself associates with the Mediator complex.

Its subcellular location is the nucleus. Component of the SRB8-11 complex. The SRB8-11 complex is a regulatory module of the Mediator complex which is itself involved in regulation of basal and activated RNA polymerase II-dependent transcription. The SRB8-11 complex may be involved in the transcriptional repression of a subset of genes regulated by Mediator. It may inhibit the association of the Mediator complex with RNA polymerase II to form the holoenzyme complex. The protein is Mediator of RNA polymerase II transcription subunit 12 (SRB8) of Candida glabrata (strain ATCC 2001 / BCRC 20586 / JCM 3761 / NBRC 0622 / NRRL Y-65 / CBS 138) (Yeast).